Consider the following 159-residue polypeptide: Ribosomal RNA large subunit methyltransferase H (159 aa).

Residues L76, G108, and 127 to 132 each bind S-adenosyl-L-methionine; that span reads FGRMTY.

The protein belongs to the RNA methyltransferase RlmH family. Homodimer.

The protein localises to the cytoplasm. The catalysed reaction is pseudouridine(1915) in 23S rRNA + S-adenosyl-L-methionine = N(3)-methylpseudouridine(1915) in 23S rRNA + S-adenosyl-L-homocysteine + H(+). Its function is as follows. Specifically methylates the pseudouridine at position 1915 (m3Psi1915) in 23S rRNA. The sequence is that of Ribosomal RNA large subunit methyltransferase H from Carboxydothermus hydrogenoformans (strain ATCC BAA-161 / DSM 6008 / Z-2901).